A 259-amino-acid chain; its full sequence is Gem-associated protein 2 (259 aa).

Belongs to the gemin-2 family. In terms of assembly, forms a stable heteromeric complex with survival of motor neuron protein (SMN), GEMIN3 and GEMIN4. The SMN complex is associated with the spliceosomal snRNAs U1 and U5 in the cytoplasm of oocytes.

It localises to the nucleus. Its subcellular location is the gem. It is found in the cytoplasm. In terms of biological role, the SMN complex catalyzes the assembly of small nuclear ribonucleoproteins (snRNPs), the building blocks of the spliceosome, and thereby plays an important role in the splicing of cellular pre-mRNAs. Most spliceosomal snRNPs contain a common set of Sm proteins SNRPB, SNRPD1, SNRPD2, SNRPD3, SNRPE, SNRPF and SNRPG that assemble in a heptameric protein ring on the Sm site of the small nuclear RNA to form the core snRNP (Sm core). In the cytosol, the Sm proteins SNRPD1, SNRPD2, SNRPE, SNRPF and SNRPG (5Sm) are trapped in an inactive 6S pICln-Sm complex by the chaperone CLNS1A that controls the assembly of the core snRNP. To assemble core snRNPs, the SMN complex accepts the trapped 5Sm proteins from CLNS1A. Binding of snRNA inside 5Sm ultimately triggers eviction of the SMN complex, thereby allowing binding of SNRPD3 and SNRPB to complete assembly of the core snRNP. Within the SMN complex, GEMIN2 constrains the conformation of 5Sm, thereby promoting 5Sm binding to snRNA containing the snRNP code (a nonameric Sm site and a 3'-adjacent stem-loop), thus preventing progression of assembly until a cognate substrate is bound. This is Gem-associated protein 2 (gemin2) from Xenopus laevis (African clawed frog).